Here is a 119-residue protein sequence, read N- to C-terminus: Membrane-anchored ubiquitin-fold protein 6 (119 aa).

One can recognise a Ubiquitin-like domain in the interval 8–76; it reads IELKFRLADG…NNRTLAESRL (69 aa). Cysteine 114 carries the S-palmitoyl cysteine lipid modification. Cysteine 116 carries the post-translational modification Cysteine methyl ester. The S-geranylgeranyl cysteine moiety is linked to residue cysteine 116. Residues 117–119 constitute a propeptide, removed in mature form; the sequence is TIL.

As to expression, ubiquitous.

Its subcellular location is the cell membrane. May serve as docking site to facilitate the association of other proteins to the plasma membrane. The polypeptide is Membrane-anchored ubiquitin-fold protein 6 (MUB6) (Arabidopsis thaliana (Mouse-ear cress)).